Here is a 412-residue protein sequence, read N- to C-terminus: Vacuolar calcium ion transporter (412 aa).

Over 1 to 55 the chain is Cytoplasmic; the sequence is MIERLKIAKNRLEAMNSFNFPAQDRHERAPLLGSEYDHSMARQLSLLNVVGMTKS. Residues 56–76 form a helical membrane-spanning segment; sequence VLMSSYFNLMLVFVPIGLIAG. Residues 77-83 are Lumenal-facing; the sequence is WFEWNAK. A helical transmembrane segment spans residues 84 to 104; the sequence is SVFILNMLAIIPLASLLSFAT. At 105–114 the chain is on the cytoplasmic side; that stretch reads EQLSIISGPT. The helical transmembrane segment at 115–135 threads the bilayer; sequence LGALLNASFGNAIELIVGVLA. The Lumenal segment spans residues 136–148; sequence LKRGELRIVQSSL. The helical transmembrane segment at 149–169 threads the bilayer; it reads LGSILSNLLLVFGMCLVTTGI. The Cytoplasmic segment spans residues 170 to 177; that stretch reads RREITTFN. The helical transmembrane segment at 178–198 threads the bilayer; that stretch reads ITVAQTMIAMLALSTATILIP. Topologically, residues 199–215 are lumenal; that stretch reads ATFHYSLPDNANSENAL. The helical transmembrane segment at 216–236 threads the bilayer; that stretch reads LHVSRGTAVIVLIVYVLLLVF. Residues 237-264 lie on the Cytoplasmic side of the membrane; it reads QLKTHKHVCHDPSEVEEETEPRILGLRS. A helical membrane pass occupies residues 265–285; it reads SIAMLAIVTVFVSLCADYLVG. Topologically, residues 286–299 are lumenal; sequence SIDQLVEEVNISKT. A helical membrane pass occupies residues 300–320; it reads FVGLVILPVVGNAAEHVTAIV. Residues 321–334 lie on the Cytoplasmic side of the membrane; it reads VSYRGQMDLALGVA. Residues 335–355 form a helical membrane-spanning segment; it reads IGSSIQIALFLAPFLVIVGWI. Over 356–358 the chain is Lumenal; the sequence is ISQ. A helical membrane pass occupies residues 359 to 379; that stretch reads PLTLYFESLETVILFVSVFLV. The Cytoplasmic portion of the chain corresponds to 380 to 389; the sequence is NYLIQDGATH. A helical transmembrane segment spans residues 390 to 410; that stretch reads WLEGVQLLALYAIVVLAFFYY. At 411 to 412 the chain is on the lumenal side; that stretch reads PQ.

Belongs to the Ca(2+):cation antiporter (CaCA) (TC 2.A.19) family.

Its subcellular location is the vacuole membrane. The protein localises to the endoplasmic reticulum membrane. Functionally, has a role in promoting intracellular calcium ion sequestration via the exchange of calcium ions for hydrogen ions across the vacuolar membrane. Involved also in manganese ion homeostasis via its uptake into the vacuole. The chain is Vacuolar calcium ion transporter (vcx1) from Schizosaccharomyces pombe (strain 972 / ATCC 24843) (Fission yeast).